The chain runs to 657 residues: Macrolide export ATP-binding/permease protein MacB (657 aa).

The 238-residue stretch at 5 to 242 (LELLDVHRTY…RAVTGESAFD (238 aa)) folds into the ABC transporter domain. 41–48 (GASGSGKS) is an ATP binding site. A run of 4 helical transmembrane segments spans residues 276–296 (FLSV…MALG), 538–558 (IAAI…LVSV), 596–616 (IGVF…GWAV), and 620–640 (LLSV…FGLW).

It belongs to the ABC transporter superfamily. Macrolide exporter (TC 3.A.1.122) family. As to quaternary structure, homodimer.

The protein resides in the cell inner membrane. In terms of biological role, non-canonical ABC transporter that contains transmembrane domains (TMD), which form a pore in the inner membrane, and an ATP-binding domain (NBD), which is responsible for energy generation. Confers resistance against macrolides. The chain is Macrolide export ATP-binding/permease protein MacB from Chlorobium phaeobacteroides (strain DSM 266 / SMG 266 / 2430).